The chain runs to 117 residues: Large ribosomal subunit protein bL20 (117 aa).

It belongs to the bacterial ribosomal protein bL20 family.

Binds directly to 23S ribosomal RNA and is necessary for the in vitro assembly process of the 50S ribosomal subunit. It is not involved in the protein synthesizing functions of that subunit. The sequence is that of Large ribosomal subunit protein bL20 from Thermomicrobium roseum (strain ATCC 27502 / DSM 5159 / P-2).